A 554-amino-acid polypeptide reads, in one-letter code: CTP synthase (554 aa).

The segment at 1 to 265 (MTPLIFVTGG…DEIVIDQFKL (265 aa)) is amidoligase domain. S13 lines the CTP pocket. A UTP-binding site is contributed by S13. Residues 14-19 (SLGKGI) and D71 each bind ATP. 2 residues coordinate Mg(2+): D71 and E139. CTP contacts are provided by residues 146–148 (DIE), 186–191 (KTKPTQ), and K222. Residues 186-191 (KTKPTQ) and K222 contribute to the UTP site. The Glutamine amidotransferase type-1 domain maps to 292–545 (TIAVVGKYVD…VKAARARKAG (254 aa)). Residue G353 participates in L-glutamine binding. C380 acts as the Nucleophile; for glutamine hydrolysis in catalysis. Residues 381–384 (YGMQ), E404, and R471 contribute to the L-glutamine site. Catalysis depends on residues H518 and E520.

Belongs to the CTP synthase family. As to quaternary structure, homotetramer.

It catalyses the reaction UTP + L-glutamine + ATP + H2O = CTP + L-glutamate + ADP + phosphate + 2 H(+). It carries out the reaction L-glutamine + H2O = L-glutamate + NH4(+). The enzyme catalyses UTP + NH4(+) + ATP = CTP + ADP + phosphate + 2 H(+). It participates in pyrimidine metabolism; CTP biosynthesis via de novo pathway; CTP from UDP: step 2/2. With respect to regulation, allosterically activated by GTP, when glutamine is the substrate; GTP has no effect on the reaction when ammonia is the substrate. The allosteric effector GTP functions by stabilizing the protein conformation that binds the tetrahedral intermediate(s) formed during glutamine hydrolysis. Inhibited by the product CTP, via allosteric rather than competitive inhibition. In terms of biological role, catalyzes the ATP-dependent amination of UTP to CTP with either L-glutamine or ammonia as the source of nitrogen. Regulates intracellular CTP levels through interactions with the four ribonucleotide triphosphates. This chain is CTP synthase, found in Xylella fastidiosa (strain 9a5c).